The chain runs to 273 residues: Putative ABC transporter ATP-binding protein DVU_1056 (273 aa).

Positions 10–242 (LSLDDIHFTY…IHHGGEVAHE (233 aa)) constitute an ABC transporter domain. 44–51 (GHNGSGKT) provides a ligand contact to ATP. A disordered region spans residues 234 to 273 (HHGGEVAHEHPSRGCCHQHDGSHHHAGHDDDHPHTSQTTE). Basic and acidic residues predominate over residues 235-267 (HGGEVAHEHPSRGCCHQHDGSHHHAGHDDDHPH).

It belongs to the ABC transporter superfamily.

It localises to the cell inner membrane. In terms of biological role, probably part of an ABC transporter complex. Responsible for energy coupling to the transport system. This is Putative ABC transporter ATP-binding protein DVU_1056 from Nitratidesulfovibrio vulgaris (strain ATCC 29579 / DSM 644 / CCUG 34227 / NCIMB 8303 / VKM B-1760 / Hildenborough) (Desulfovibrio vulgaris).